The sequence spans 259 residues: Glutamate 5-kinase (259 aa).

Lys-18 provides a ligand contact to ATP. Positions 54, 141, and 153 each coordinate substrate. Position 173–174 (173–174 (SD)) interacts with ATP.

The protein belongs to the glutamate 5-kinase family.

The protein resides in the cytoplasm. The enzyme catalyses L-glutamate + ATP = L-glutamyl 5-phosphate + ADP. It functions in the pathway amino-acid biosynthesis; L-proline biosynthesis; L-glutamate 5-semialdehyde from L-glutamate: step 1/2. In terms of biological role, catalyzes the transfer of a phosphate group to glutamate to form L-glutamate 5-phosphate. This is Glutamate 5-kinase from Clavibacter sepedonicus (Clavibacter michiganensis subsp. sepedonicus).